A 78-amino-acid chain; its full sequence is Antimicrobial peptide marcin-18 (78 aa).

The first 23 residues, 1 to 23 (MQFKKQLMVIFLAYFLVVNESEA), serve as a signal peptide directing secretion. Residue R41 is modified to Arginine amide. A propeptide spanning residues 42 to 78 (RKNQRSRSIMKRDLENLFDPYQRNLELDRLLKQLPNY) is cleaved from the precursor.

Belongs to the non-disulfide-bridged peptide (NDBP) superfamily. Medium-length antimicrobial peptide (group 3) family. Expressed by the venom gland.

The protein resides in the secreted. It localises to the target cell membrane. In terms of biological role, antimicrobial peptide with potent activity against bacteria. Acts by fastly disrupting the bacterial membrane. Shows activity against Gram-positive bacteria S.aureus (MIC=1.5-2.9 uM) and S.epidermidis (MIC=2.9 uM), M.luteus (MIC=23.4 uM), B.thuringiensis (MIC=2.9 uM), B.subtilis (MIC=2.9 uM) and Gram-negative bacteria E.coli (MIC=5.9-11.7 uM) and P.aeruginosa (MIC=5.9 uM), as well as against penicillin (MIC=2.9 uM) and methicillin (MIC=1.5-2.9 uM) resistant bacteria. Antibiotic activity is not affected by major negatively charged components of the prokaryotic cell wall (e.g. lipopolysaccharides and lipoteichoic acid). In vivo, in a mouse model of lethal peritonitis, shows potent antibiotic activity without cytotoxicity, improving the survival rate. The sequence is that of Antimicrobial peptide marcin-18 from Olivierus martensii (Manchurian scorpion).